The chain runs to 541 residues: EH domain-containing protein 4 (541 aa).

Met-1 is subject to N-acetylmethionine. The tract at residues 1–20 (MFSWMGRQAGGRERSGGMDA) is disordered. Phosphoserine is present on Ser-15. The Dynamin-type G domain occupies 58-289 (FENKPMILLV…DLFRDIQSLP (232 aa)). The segment at 68 to 75 (GQYSTGKT) is G1 motif. 68-75 (GQYSTGKT) lines the ATP pocket. The tract at residues 94 to 95 (EP) is G2 motif. The tract at residues 156–159 (DSPG) is G3 motif. Ser-162 is modified (phosphoserine). The interval 222–225 (NKAD) is G4 motif. Lys-223 is an ATP binding site. Val-246 is a region of interest (G5 motif). Trp-261 serves as a coordination point for ATP. Residues 447–535 (DKPVYDELFY…PHLVPPSHRK (89 aa)) enclose the EH domain. At Tyr-451 the chain carries Phosphotyrosine. Ser-459 is subject to Phosphoserine. Residues 479 to 514 (LPNSVLGKIWKLADCDCDGMLDEEEFALAKHLIKIK) form the EF-hand domain. Asp-492, Asp-494, Asp-496, Met-498, and Glu-503 together coordinate Ca(2+).

The protein belongs to the TRAFAC class dynamin-like GTPase superfamily. Dynamin/Fzo/YdjA family. EHD subfamily. As to quaternary structure, homooligomer, and heterooligomer with EHD1, EHD2 and EHD3. Forms a complex with EHD4 and MICALL1; the complex controls CDH5 trafficking and coordinates angiogenesis.

Its subcellular location is the early endosome membrane. It localises to the recycling endosome membrane. The protein resides in the cell membrane. The protein localises to the cell junction. It is found in the adherens junction. Its function is as follows. ATP- and membrane-binding protein that probably controls membrane reorganization/tubulation upon ATP hydrolysis. Plays a role in early endosomal transport. During sprouting angiogenesis, in complex with PACSIN2 and MICALL1, forms recycling endosome-like tubular structure at asymmetric adherens junctions to control CDH5 trafficking. This Mus musculus (Mouse) protein is EH domain-containing protein 4.